Here is a 301-residue protein sequence, read N- to C-terminus: POU domain, class 6, transcription factor 1 (301 aa).

A run of 2 repeats spans residues 11–17 (NAQGQVI) and 50–56 (NAQGQVI). The tract at residues 11–56 (NAQGQVIGALPWVVNSASVATPAPAQSLQVQAVTPQLLLNAQGQVI) is 2 X 7 AA repeats of N-A-Q-G-Q-V-I. The tract at residues 66 to 88 (QPVAVRKPSTPESPAKSEVQPIQ) is disordered. Residues 139 to 213 (EDGINLEEIR…VLEKWLNEAE (75 aa)) form the POU-specific domain. The homeobox DNA-binding region spans 234 to 293 (KRKRRTSFTPQAIEALNAYFEKNPLPTGQEITEIAKELNYDREVVRVWFCNRRQTLKNTS).

It belongs to the POU transcription factor family. Class-6 subfamily. As to expression, in the embryo, widely expressed, with highest levels in the developing brain and spinal cord. In the adult, mostly found in the brain, where it is diffusely expressed with the exception of an enrichment in layer IV of the neocortex. Also found in kidney, lung, heart, adrenal, skin, and placenta. Low levels in spleen, muscle, liver, anterior pituitary, testis and ovary.

It is found in the nucleus. Its function is as follows. Transcription factor that binds preferentially to a variant of the octamer motif (5'-ATGATAAT-3'). In Rattus norvegicus (Rat), this protein is POU domain, class 6, transcription factor 1 (Pou6f1).